The primary structure comprises 366 residues: L-Ala-D/L-Glu epimerase (366 aa).

Residues Arg24, Thr135, and Lys160 each coordinate substrate. Lys162 serves as the catalytic Proton acceptor; specific for (R)-substrate epimerization. Mg(2+) is bound by residues Asp191, Glu219, and Asp244. Lys268 functions as the Proton acceptor; specific for (S)-substrate epimerization in the catalytic mechanism. The substrate site is built by Ser296, Ile298, Asp321, and Asp323.

It belongs to the mandelate racemase/muconate lactonizing enzyme family. In terms of assembly, homooctamer; tetramer of dimers. Mg(2+) is required as a cofactor.

It catalyses the reaction L-alanyl-L-glutamate = L-alanyl-D-glutamate. Its pathway is cell wall degradation; peptidoglycan degradation. Its function is as follows. Catalyzes the epimerization of L-Ala-D-Glu to L-Ala-L-Glu and has probably a role in the metabolism of the murein peptide, of which L-Ala-D-Glu is a component. Is also able to catalyze the reverse reaction and the epimerization of the other Ala-X dipeptides L-Ala-L-Asp, L-Ala-L-Leu, L-Ala-L-Met, and L-Ala-L-Ser. Is not able to epimerize other L-Ala-X dipeptides. Is also active with L-Ser-L-Glu and, oddly, L-Pro-L-Glu, but not with L-Glu-L-Glu, L-Lys-L-Glu, L-Lys-L-Ala, or D-Ala-D-Ala. This chain is L-Ala-D/L-Glu epimerase (ykfB), found in Bacillus subtilis (strain 168).